Reading from the N-terminus, the 59-residue chain is Large ribosomal subunit protein bL33 (59 aa).

It belongs to the bacterial ribosomal protein bL33 family.

The chain is Large ribosomal subunit protein bL33 from Borrelia recurrentis (strain A1).